Here is a 949-residue protein sequence, read N- to C-terminus: AP-1 complex subunit beta-1 (949 aa).

Lys318 carries the N6-acetyllysine modification. Tyr574 is subject to 3'-nitrotyrosine. Residues 592–623 are disordered; sequence SLPPRTASSESTESPEAAPAGAPASDQPDVIP. Residues 594–616 are compositionally biased toward low complexity; it reads PPRTASSESTESPEAAPAGAPAS.

This sequence belongs to the adaptor complexes large subunit family. Adaptor protein complex 1 (AP-1) is a heterotetramer composed of two large adaptins (gamma-type subunit AP1G1 and beta-type subunit AP1B1), a medium adaptin (mu-type subunit AP1M1 or AP1M2) and a small adaptin (sigma-type subunit AP1S1 or AP1S2 or AP1S3). Post-translationally, the N-terminus is blocked.

The protein localises to the golgi apparatus. Its subcellular location is the cytoplasmic vesicle. It is found in the clathrin-coated vesicle membrane. Its function is as follows. Subunit of clathrin-associated adaptor protein complex 1 that plays a role in protein sorting in the late-Golgi/trans-Golgi network (TGN) and/or endosomes. The AP complexes mediate both the recruitment of clathrin to membranes and the recognition of sorting signals within the cytosolic tails of transmembrane cargo molecules. This is AP-1 complex subunit beta-1 (Ap1b1) from Rattus norvegicus (Rat).